A 91-amino-acid chain; its full sequence is UPF0358 protein SERP0701 (91 aa).

This sequence belongs to the UPF0358 family.

This is UPF0358 protein SERP0701 from Staphylococcus epidermidis (strain ATCC 35984 / DSM 28319 / BCRC 17069 / CCUG 31568 / BM 3577 / RP62A).